The sequence spans 502 residues: Protein DETOXIFICATION 55 (502 aa).

The next 12 membrane-spanning stretches (helical) occupy residues 30–50 (IWDI…KNMT), 61–81 (LELA…YSVL), 112–132 (IFLL…LAPL), 145–165 (VASL…FLHP), 185–205 (VSVL…SLGV), 207–227 (GVAV…LCYI), 261–283 (VWST…WWWY), 298–318 (VALA…TIPT), 344–364 (ATVA…GTTV), 378–398 (VVLE…LANC), 419–439 (INFY…AFVW), and 447–467 (CYGL…VVYN).

This sequence belongs to the multi antimicrobial extrusion (MATE) (TC 2.A.66.1) family.

Its subcellular location is the membrane. This Arabidopsis thaliana (Mouse-ear cress) protein is Protein DETOXIFICATION 55.